A 349-amino-acid polypeptide reads, in one-letter code: Hydroxymethylglutaryl-CoA synthase (349 aa).

The (3S)-3-hydroxy-3-methylglutaryl-CoA site is built by D30 and A31. The active-site Proton donor/acceptor is the E82. (3S)-3-hydroxy-3-methylglutaryl-CoA is bound by residues C114 and T155. Residue C114 is the Acyl-thioester intermediate of the active site. R203 is a CoA binding site. Residues T205 and H238 each coordinate (3S)-3-hydroxy-3-methylglutaryl-CoA. H238 serves as the catalytic Proton donor/acceptor. A CoA-binding site is contributed by K243. (3S)-3-hydroxy-3-methylglutaryl-CoA-binding residues include N270 and S300.

This sequence belongs to the thiolase-like superfamily. Archaeal HMG-CoA synthase family. As to quaternary structure, interacts with acetoacetyl-CoA thiolase that catalyzes the precedent step in the pathway and with a DUF35 protein. The acetoacetyl-CoA thiolase/HMG-CoA synthase complex channels the intermediate via a fused CoA-binding site, which allows for efficient coupling of the endergonic thiolase reaction with the exergonic HMGCS reaction.

It catalyses the reaction acetoacetyl-CoA + acetyl-CoA + H2O = (3S)-3-hydroxy-3-methylglutaryl-CoA + CoA + H(+). Its pathway is metabolic intermediate biosynthesis; (R)-mevalonate biosynthesis; (R)-mevalonate from acetyl-CoA: step 2/3. In terms of biological role, catalyzes the condensation of acetyl-CoA with acetoacetyl-CoA to form 3-hydroxy-3-methylglutaryl-CoA (HMG-CoA). Functions in the mevalonate (MVA) pathway leading to isopentenyl diphosphate (IPP), a key precursor for the biosynthesis of isoprenoid compounds that are building blocks of archaeal membrane lipids. This chain is Hydroxymethylglutaryl-CoA synthase, found in Methanococcus maripaludis (strain C7 / ATCC BAA-1331).